The chain runs to 208 residues: MNEAEKISNLDEPRLFEEDGIEARVAALVIPLLKPLGFRLVRVKLLGQNGLTLQIMVERADGSLTVEDCETVSRTVSPLLDVENVIERKYHLEISSPGIDRPLVRKSDFFHWQGHLAKIETKITIDGRRKFRGTLTNITQDGFILNADKAAYGEAMYTSISFCDIIGAHLVLTDELIRDALKKNKDLSQQFIPEDNPTDSIQTLNFKK.

The protein belongs to the RimP family.

It localises to the cytoplasm. Its function is as follows. Required for maturation of 30S ribosomal subunits. This chain is Ribosome maturation factor RimP, found in Bartonella tribocorum (strain CIP 105476 / IBS 506).